We begin with the raw amino-acid sequence, 105 residues long: Pyrimidine/purine nucleoside phosphorylase (105 aa).

This sequence belongs to the nucleoside phosphorylase PpnP family.

The catalysed reaction is a purine D-ribonucleoside + phosphate = a purine nucleobase + alpha-D-ribose 1-phosphate. The enzyme catalyses adenosine + phosphate = alpha-D-ribose 1-phosphate + adenine. It catalyses the reaction cytidine + phosphate = cytosine + alpha-D-ribose 1-phosphate. It carries out the reaction guanosine + phosphate = alpha-D-ribose 1-phosphate + guanine. The catalysed reaction is inosine + phosphate = alpha-D-ribose 1-phosphate + hypoxanthine. The enzyme catalyses thymidine + phosphate = 2-deoxy-alpha-D-ribose 1-phosphate + thymine. It catalyses the reaction uridine + phosphate = alpha-D-ribose 1-phosphate + uracil. It carries out the reaction xanthosine + phosphate = alpha-D-ribose 1-phosphate + xanthine. Functionally, catalyzes the phosphorolysis of diverse nucleosides, yielding D-ribose 1-phosphate and the respective free bases. Can use uridine, adenosine, guanosine, cytidine, thymidine, inosine and xanthosine as substrates. Also catalyzes the reverse reactions. This Delftia acidovorans (strain DSM 14801 / SPH-1) protein is Pyrimidine/purine nucleoside phosphorylase.